An 864-amino-acid chain; its full sequence is Mitochondrial 15S rRNA processing factor CCM1 (864 aa).

The transit peptide at 1–76 directs the protein to the mitochondrion; that stretch reads MYMARCGPKN…REFSNTLKER (76 aa). 2 PPR repeats span residues 319–353 and 356–390; these read NKQN…STKH and DICT…NIKP.

It belongs to the CCM1 family. As to quaternary structure, binds to mitochondrial small subunit 15S rRNA.

The protein resides in the mitochondrion. In terms of biological role, regulates mitochondrial small subunit maturation by controlling 15S rRNA 5'-end processing. Localizes to the 5' precursor of the 15S rRNA in a position that is subsequently occupied by mS47 in the mature yeast mtSSU. Uses structure and sequence-specific RNA recognition, binding to a single-stranded region of the precursor and specifically recognizing bases -6 to -1. The exchange of Ccm1 for mS47 is coupled to the irreversible removal of precursor rRNA that is accompanied by conformational changes of the mitoribosomal proteins uS5m and mS26. These conformational changes signal completion of 5'-end rRNA processing through protection of the mature 5'-end of the 15S rRNA and stabilization of mS47. The removal of the 5' precursor together with the dissociation of Ccm1 may be catalyzed by the 5'-3' exoribonuclease Pet127. Involved in the specific removal of group I introns in mitochondrial encoded transcripts. The protein is Mitochondrial 15S rRNA processing factor CCM1 (CCM1) of Saccharomyces cerevisiae (strain JAY291) (Baker's yeast).